The chain runs to 429 residues: Large ribosomal subunit protein mL37 (429 aa).

The transit peptide at 1-29 directs the protein to the mitochondrion; the sequence is MALRPVVLRRAPAHSRGILTRPGPPRPRG. The tract at residues 12–45 is disordered; the sequence is PAHSRGILTRPGPPRPRGPLPRTPWTTRGPPPDQ. The span at 22-33 shows a compositional bias: pro residues; it reads PGPPRPRGPLPR.

The protein belongs to the mitochondrion-specific ribosomal protein mL37 family. In terms of assembly, component of the mitochondrial ribosome large subunit (39S) which comprises a 16S rRNA and about 50 distinct proteins.

The protein localises to the mitochondrion. In Gallus gallus (Chicken), this protein is Large ribosomal subunit protein mL37 (MRPL37).